A 530-amino-acid chain; its full sequence is Laccase-2 (530 aa).

Positions 1 to 23 (MLLSSAFVGSCLAILNFAAAVSA) are cleaved as a signal peptide. Plastocyanin-like domains follow at residues 36–154 (NKVI…YDPE) and 167–311 (TTII…RYTN). A glycan (N-linked (GlcNAc...) asparagine) is linked at Asn-82. Cu cation contacts are provided by His-88 and His-90. 2 disulfide bridges follow: Cys-109–Cys-520 and Cys-141–Cys-228. A glycan (N-linked (GlcNAc...) asparagine) is linked at Asn-120. Residues His-133 and His-135 each coordinate Cu cation. N-linked (GlcNAc...) asparagine glycans are attached at residues Asn-191, Asn-240, Asn-292, Asn-311, Asn-366, Asn-375, Asn-392, and Asn-412. A Plastocyanin-like 3 domain is found at 379 to 504 (YVNPTVPVLL…FAVVLAEAPQ (126 aa)). The Cu cation site is built by His-428, His-431, His-433, His-484, Cys-485, His-486, and His-490.

The protein belongs to the multicopper oxidase family. The cofactor is Cu cation.

The protein localises to the secreted. The catalysed reaction is 4 hydroquinone + O2 = 4 benzosemiquinone + 2 H2O. Inhibited by chloride ions. Inhibited by citrate. Inhibited by oxalate. Activated by acetate. Functionally, in vitro, has activity towards 2,2'-azino-bis(3-ethylbenzthiazoline-6-sulfonic acid) (ABTS), 2,6-dimethoxy-phenol, and guaiacol. Although brown rot fungi preferentially degrade hemicellulose and cellulose, the enzyme may contribute to generating small amounts of lignin breakdown products required for catalytic reactions. This Fomitopsis schrenkii (Brown rot fungus) protein is Laccase-2.